Reading from the N-terminus, the 271-residue chain is CAAX prenyl protease 2 (271 aa).

Over 1–9 the chain is Extracellular; the sequence is MISSYKYNP. A helical transmembrane segment spans residues 10–30; it reads KLYFLSTFVVTYILWFTGAYL. Residues 31 to 38 are Cytoplasmic-facing; the sequence is SFSSTYSG. A helical transmembrane segment spans residues 39-59; the sequence is IYMLIMLPGLMAPFIISTILI. At 60–82 the chain is on the extracellular side; the sequence is AKSKNNELKKDFINRLFNLKLIN. The helical transmembrane segment at 83 to 105 threads the bilayer; the sequence is LKTIPVVFLLMPAVILLSILLSI. At 106–125 the chain is on the cytoplasmic side; it reads PFGGSISQFQFSGGFSFSTD. The helical transmembrane segment at 126–149 threads the bilayer; that stretch reads FVPVLFLLLLAATFEELGWRGYAF. Glu-140 acts as the Proton donor/acceptor in catalysis. Residues 150–159 are Extracellular-facing; that stretch reads DSLQSRYSLF. Residues 160 to 179 traverse the membrane as a helical segment; it reads KASILFGIFWSLWHFPLIFV. The active-site Proton donor/acceptor is His-173. Topologically, residues 180–192 are cytoplasmic; sequence NNSYQYEIFNQSI. Residues 193–213 traverse the membrane as a helical segment; sequence WYGLNFFLSILPMGIIITWMC. The Extracellular segment spans residues 214–219; the sequence is LKNRKS. The chain crosses the membrane as a helical span at residues 220-237; the sequence is IILAIIFHFLINLNQELL. Residues 238–243 are Cytoplasmic-facing; sequence AITQDT. A helical transmembrane segment spans residues 244 to 263; the sequence is KIIETGVLFLVAAAIILYDK. The Extracellular portion of the chain corresponds to 264–271; it reads KMFFEKLG.

The protein belongs to the peptidase U48 family.

It is found in the cell membrane. It catalyses the reaction Hydrolyzes the peptide bond -P2-(S-farnesyl or geranylgeranyl)C-P1'-P2'-P3'-COOH where P1' and P2' are amino acids with aliphatic sidechains and P3' is any C-terminal residue.. With respect to regulation, activity is unaffected by metalloprotease inhibitors 5 mM EDTA and 5 mM Zn(2+). Activity partially inhibited by 1,10-phenanthroline and 1,7-phenanthroline. In terms of biological role, protease involved in the processing of a variety of prenylated proteins containing the C-terminal CAAX motif, where C is a cysteine modified with an isoprenoid lipid, A is an aliphatic amino acid and X is any C-terminal amino acid. Proteolytically removes the C-terminal three residues of farnesylated proteins, leaving the prenylated cysteine as the new C-terminus. Hydrolysis depends on a farnesylated cysteine residue and no activity is shown towards geranylgeranylated peptides. The sequence is that of CAAX prenyl protease 2 from Methanococcus maripaludis (strain DSM 14266 / JCM 13030 / NBRC 101832 / S2 / LL).